We begin with the raw amino-acid sequence, 869 residues long: MTESEIPKEYNANEVEKKWMEKWNLSMYHFNWGEDTRPQYIIDTPPPYPTGNFHIGNALNWCYIDFVARYKRMRGYNVMFPQGWDCHGLPTEVKVEETHGITKNQVPRAEFRRMCRELTAGNIDKMRQTMLRLGFSVDWSNEFVTMEPSYFVKTQKSFVRMYNNGHIYHEDHPVNWCPRCETAIAFAEVEYDQGQTKLNFVHFDKVDIATTRPELMAACVAVAVNPEDERYSQYIGKEIEVPLFGQKVTLIADEAVEPEFGTGAVMICTFGDKQDVRWWAKYGLPLIKAIDKQGRMTKAAGKYEGMSIPECRQAVISDLRDAGFLYNQKPLEQNVGLCWRCDTPIEILSEPQWFVKINHEGILKAADEINWYPEYMKVRLQNWTGTMEWDWCISRQRIFATPIPIWYCKKCGEVMIAEESWLPIDPNENVPKKACACGSTEFEPETDVLDTWMDSSITALHVSGWESEHDLRLPAQIRPQGHDIIRTWAFYTILRSLALEGKRPWDSIVINGMVLGPDGHKMSKSLGNVISPEEVTTQYSADAFRQWGAVGGSTGSDVMFRWKDVVSASRFLQKMWSIYRFSMSHLKDFDPADAENFPPDSLYTIDRWLLSKLNRLVESTTKELDGYQFDSTFKAIRGFAWEVLADNYLELVKGRLYGENKEGRKAAQYVLYTTTRTLSLLLAPFIPFFAEEMYSRFDSASVHTRAWPAVNESLMSEEAEAAGEMIKDITGEVRRYKSDLGMALNAPLKKIEIYNTQIDTGDIAGATNSEVELMEGAPSFDYVPVEVKPNMGILGPRFRKDAGAIVKALKAEDPASVEAQIASGRITVTVNGEKIELEPEAVEIRKEVISGGREVDVLDIKGAVVVIVR.

The 'HIGH' region motif lies at 47–57; that stretch reads PYPTGNFHIGN. The 'KMSKS' region signature appears at 521-525; the sequence is KMSKS. Lys-524 provides a ligand contact to ATP.

This sequence belongs to the class-I aminoacyl-tRNA synthetase family. ValS type 2 subfamily.

It localises to the cytoplasm. It catalyses the reaction tRNA(Val) + L-valine + ATP = L-valyl-tRNA(Val) + AMP + diphosphate. Its function is as follows. Catalyzes the attachment of valine to tRNA(Val). As ValRS can inadvertently accommodate and process structurally similar amino acids such as threonine, to avoid such errors, it has a 'posttransfer' editing activity that hydrolyzes mischarged Thr-tRNA(Val) in a tRNA-dependent manner. The polypeptide is Valine--tRNA ligase (Methanosarcina mazei (strain ATCC BAA-159 / DSM 3647 / Goe1 / Go1 / JCM 11833 / OCM 88) (Methanosarcina frisia)).